The following is a 63-amino-acid chain: Cytochrome c oxidase subunit 5C (63 aa).

Residues 16-34 form a helical membrane-spanning segment; it reads VVKEICIGLTLGLVAGGLW.

The protein belongs to the cytochrome c oxidase subunit 5C family.

It is found in the mitochondrion inner membrane. Its function is as follows. This protein is one of the nuclear-coded polypeptide chains of cytochrome c oxidase, the terminal oxidase in mitochondrial electron transport. The polypeptide is Cytochrome c oxidase subunit 5C (COX5C) (Oryza sativa subsp. japonica (Rice)).